Reading from the N-terminus, the 140-residue chain is Transcription antitermination protein NusB (140 aa).

It belongs to the NusB family.

In terms of biological role, involved in transcription antitermination. Required for transcription of ribosomal RNA (rRNA) genes. Binds specifically to the boxA antiterminator sequence of the ribosomal RNA (rrn) operons. The sequence is that of Transcription antitermination protein NusB from Sorangium cellulosum (strain So ce56) (Polyangium cellulosum (strain So ce56)).